A 284-amino-acid polypeptide reads, in one-letter code: 4-diphosphocytidyl-2-C-methyl-D-erythritol kinase (284 aa).

Lys-9 is an active-site residue. Residue 92 to 102 participates in ATP binding; it reads PMGGGIGGGSS. Residue Asp-134 is part of the active site.

The protein belongs to the GHMP kinase family. IspE subfamily.

The catalysed reaction is 4-CDP-2-C-methyl-D-erythritol + ATP = 4-CDP-2-C-methyl-D-erythritol 2-phosphate + ADP + H(+). It functions in the pathway isoprenoid biosynthesis; isopentenyl diphosphate biosynthesis via DXP pathway; isopentenyl diphosphate from 1-deoxy-D-xylulose 5-phosphate: step 3/6. Functionally, catalyzes the phosphorylation of the position 2 hydroxy group of 4-diphosphocytidyl-2C-methyl-D-erythritol. In Stutzerimonas stutzeri (strain A1501) (Pseudomonas stutzeri), this protein is 4-diphosphocytidyl-2-C-methyl-D-erythritol kinase.